Consider the following 237-residue polypeptide: Ribosomal RNA small subunit methyltransferase G (237 aa).

Residues 1–25 (MASRHSPQTAAQPDAADKAQALRLT) form a disordered region. Low complexity predominate over residues 7–21 (PQTAAQPDAADKAQA). Residues G85, F90, and R155 each contribute to the S-adenosyl-L-methionine site.

This sequence belongs to the methyltransferase superfamily. RNA methyltransferase RsmG family.

The protein resides in the cytoplasm. It catalyses the reaction guanosine(527) in 16S rRNA + S-adenosyl-L-methionine = N(7)-methylguanosine(527) in 16S rRNA + S-adenosyl-L-homocysteine. Specifically methylates the N7 position of guanine in position 527 of 16S rRNA. In Rhodopseudomonas palustris (strain HaA2), this protein is Ribosomal RNA small subunit methyltransferase G.